The following is a 369-amino-acid chain: 3,7-dimethylxanthine N-methyltransferase TCS1 (369 aa).

Tyrosine 24 contributes to the S-adenosyl-L-homocysteine binding site. A caffeine-binding site is contributed by threonine 31. Residues cysteine 66, asparagine 71, aspartate 103, leucine 104, serine 138, and phenylalanine 139 each contribute to the S-adenosyl-L-homocysteine site. The caffeine site is built by tyrosine 156, histidine 159, and tryptophan 160. Residue asparagine 177 coordinates Mg(2+). Position 225 (arginine 225) interacts with caffeine. Aspartate 263, phenylalanine 265, and asparagine 266 together coordinate Mg(2+). Phenylalanine 321 serves as a coordination point for caffeine.

It belongs to the methyltransferase superfamily. Type-7 methyltransferase family. Mg(2+) is required as a cofactor.

It catalyses the reaction 1,7-dimethylxanthine + S-adenosyl-L-methionine = caffeine + S-adenosyl-L-homocysteine + H(+). It carries out the reaction theobromine + S-adenosyl-L-methionine = caffeine + S-adenosyl-L-homocysteine + H(+). The enzyme catalyses 7-methylxanthine + S-adenosyl-L-methionine = theobromine + S-adenosyl-L-homocysteine + H(+). The protein operates within alkaloid biosynthesis. In terms of biological role, involved in the biosynthesis of caffeine in cv. Puer. Involved in the biosynthesis of theacrine in cv. Kucha, a caffeine-like xanthine alkaloid with diverse beneficial biological activities including anti-depressive, sedative, and hypnotic activities, improving learning and memory, increasing exercise activity, and preventing nonalcoholic fatty liver disease. Catalyzes the conversion of 7-methylxanthine (7mX) to theobromine and of theobromine to caffeine. Has 3-N- and 1-N-methylation activity. This Camellia sinensis var. assamica (Assam tea) protein is 3,7-dimethylxanthine N-methyltransferase TCS1.